The primary structure comprises 270 residues: NADPH-dependent 7-cyano-7-deazaguanine reductase (270 aa).

79-81 (IES) is a substrate binding site. An NADPH-binding site is contributed by 81-82 (SK). Cys-177 (thioimide intermediate) is an active-site residue. Asp-184 (proton donor) is an active-site residue. 216–217 (HE) serves as a coordination point for substrate. An NADPH-binding site is contributed by 245–246 (RG).

Belongs to the GTP cyclohydrolase I family. QueF type 2 subfamily. Homodimer.

The protein resides in the cytoplasm. The enzyme catalyses 7-aminomethyl-7-carbaguanine + 2 NADP(+) = 7-cyano-7-deazaguanine + 2 NADPH + 3 H(+). It participates in tRNA modification; tRNA-queuosine biosynthesis. In terms of biological role, catalyzes the NADPH-dependent reduction of 7-cyano-7-deazaguanine (preQ0) to 7-aminomethyl-7-deazaguanine (preQ1). In Acinetobacter baumannii (strain AB307-0294), this protein is NADPH-dependent 7-cyano-7-deazaguanine reductase.